Consider the following 238-residue polypeptide: MTHLILVRHGQSEWNLEKRFTGWVDVDLTGQGKLEACKAGEYIKETKIDIDYFYSSFQLRAINTLKFIQDTLRDKREPVKAWQLNERHYGALTGLNKDEMKEKLGEDKIHAFRRSWDIKPDPLNRNNPYHPLNIEVYKSIPKENIPDTESLKDTYDRVMKFYIDEIQMKLKNDKNILISAHGNSIRALCKFLFKLDNQRITLLEIPTGNPLLINLDSKQNIKECTYLDQDRAKDLLVF.

Residues 8 to 15 (RHGQSEWN), 21 to 22 (TG), arginine 60, 86 to 89 (ERHY), lysine 97, 113 to 114 (RR), and 182 to 183 (GN) contribute to the substrate site. Residue histidine 9 is the Tele-phosphohistidine intermediate of the active site. Catalysis depends on glutamate 86, which acts as the Proton donor/acceptor.

The protein belongs to the phosphoglycerate mutase family. BPG-dependent PGAM subfamily. In terms of assembly, homodimer.

It carries out the reaction (2R)-2-phosphoglycerate = (2R)-3-phosphoglycerate. It functions in the pathway carbohydrate degradation; glycolysis; pyruvate from D-glyceraldehyde 3-phosphate: step 3/5. Catalyzes the interconversion of 2-phosphoglycerate and 3-phosphoglycerate. This chain is 2,3-bisphosphoglycerate-dependent phosphoglycerate mutase, found in Pelagibacter ubique (strain HTCC1062).